A 280-amino-acid chain; its full sequence is 4-hydroxy-tetrahydrodipicolinate reductase (280 aa).

NAD(+) is bound by residues 14–19 (GAAGRM), D40, 106–108 (ATT), and 130–133 (APSM). Catalysis depends on H166, which acts as the Proton donor/acceptor. H167 contributes to the (S)-2,3,4,5-tetrahydrodipicolinate binding site. Residue K170 is the Proton donor of the active site. 176-177 (GT) serves as a coordination point for (S)-2,3,4,5-tetrahydrodipicolinate.

Belongs to the DapB family.

The protein localises to the cytoplasm. The catalysed reaction is (S)-2,3,4,5-tetrahydrodipicolinate + NAD(+) + H2O = (2S,4S)-4-hydroxy-2,3,4,5-tetrahydrodipicolinate + NADH + H(+). It carries out the reaction (S)-2,3,4,5-tetrahydrodipicolinate + NADP(+) + H2O = (2S,4S)-4-hydroxy-2,3,4,5-tetrahydrodipicolinate + NADPH + H(+). Its pathway is amino-acid biosynthesis; L-lysine biosynthesis via DAP pathway; (S)-tetrahydrodipicolinate from L-aspartate: step 4/4. Functionally, catalyzes the conversion of 4-hydroxy-tetrahydrodipicolinate (HTPA) to tetrahydrodipicolinate. The sequence is that of 4-hydroxy-tetrahydrodipicolinate reductase from Rhodopirellula baltica (strain DSM 10527 / NCIMB 13988 / SH1).